We begin with the raw amino-acid sequence, 992 residues long: Probable RNA-dependent RNA polymerase 3 (992 aa).

The disordered stretch occupies residues P88–D113.

This sequence belongs to the RdRP family.

It catalyses the reaction RNA(n) + a ribonucleoside 5'-triphosphate = RNA(n+1) + diphosphate. Its function is as follows. Probably involved in the RNA silencing pathway and required for the generation of small interfering RNAs (siRNAs). The polypeptide is Probable RNA-dependent RNA polymerase 3 (RDR3) (Arabidopsis thaliana (Mouse-ear cress)).